The sequence spans 213 residues: Putative cytochrome c-type biogenesis protein HI_1454 (213 aa).

6 consecutive transmembrane segments (helical) span residues 15–35 (GLAS…FGIL), 46–66 (FLFI…FGFL), 77–97 (IIAG…FKIG), 118–138 (AFVL…PILA), 154–174 (ASMM…FSFF), and 192–212 (FKIG…TNNF).

Belongs to the DsbD family.

The protein localises to the cell membrane. Functionally, could be involved in cytochrome c synthesis. The protein is Putative cytochrome c-type biogenesis protein HI_1454 of Haemophilus influenzae (strain ATCC 51907 / DSM 11121 / KW20 / Rd).